The primary structure comprises 1733 residues: Serine-aspartate repeat-containing protein F (1733 aa).

A signal peptide spans 1 to 45 (MKKRRQGPINKRVDFLSNKVNKYSIRKFTVGTASILVGATLMFGA). Residues 46–678 (ADNEAKAAED…GSSTAQGDNP (633 aa)) form a ligand binding A region region. Disordered stretches follow at residues 51–269 (KAAE…SVND) and 332–351 (PLALNRSQSKNSPHKSASPR). Residues 61–74 (ASKEEQKGSRDNEN) are compositionally biased toward basic and acidic residues. Composition is skewed to polar residues over residues 85–99 (GSHSSEKTTNVNNAT) and 146–168 (PKTSTTQQDSTEKNNPSLKDNLN). Basic and acidic residues predominate over residues 175-184 (KESKTDEHST). Over residues 186–226 (QAQMSTNKSNLDTNDSPTQSEKTSSQANNDSTDNQSAPSKQ) the composition is skewed to polar residues. Positions 227–253 (LDSKPSEQKVYKTKFNDEPTQDVEHTT) are enriched in basic and acidic residues. Polar residues-rich tracts occupy residues 255 to 266 (KLKTPSVSTDSS) and 336 to 346 (NRSQSKNSPHK). CNA-B domains are found at residues 679 to 797 (TYSL…YLTP), 798 to 907 (KYNV…FYKP), 908 to 1018 (TYNL…YKTP), and 1019 to 1129 (KYSV…FDDD). The tract at residues 679–1129 (TYSLGDYVWL…SIDNGYFDDD (451 aa)) is type I collagen binding region. Positions 862-890 (FETPEGYTPTKQNSGSDEGKDSNGTKTTV) are disordered. Residues 1085 to 1708 (KPEGMTQTTA…ANEDHDSKGT (624 aa)) are disordered. The span at 1107 to 1119 (EDVRVTITDHDDF) shows a compositional bias: basic and acidic residues. Positions 1125–1684 (YFDDDSDSDS…DSDSDSDSDS (560 aa)) are enriched in acidic residues. Basic and acidic residues predominate over residues 1685–1706 (DSDKNAKDKLPDTGANEDHDSK). An LPXTG sorting signal motif is present at residues 1694–1698 (LPDTG). At T1697 the chain carries Pentaglycyl murein peptidoglycan amidated threonine. Residues 1698 to 1733 (GANEDHDSKGTLLGTLFAGLGALLLGRRRKKDNKEK) constitute a propeptide, removed by sortase.

Belongs to the serine-aspartate repeat-containing protein (SDr) family.

It is found in the secreted. Its subcellular location is the cell wall. Its function is as follows. Binds to type I collagen via alpha-2(I) or alpha-1(I) chains, although its affinity for the alpha-1(I) chain is significantly higher. Involved in bacterial adherence to transcutaneous drivelines from explanted ventricular assist devices. This is Serine-aspartate repeat-containing protein F (sdrF) from Staphylococcus epidermidis.